We begin with the raw amino-acid sequence, 160 residues long: Large ribosomal subunit protein uL16 (160 aa).

Belongs to the universal ribosomal protein uL16 family. In terms of assembly, part of the 50S ribosomal subunit.

Binds 23S rRNA and is also seen to make contacts with the A and possibly P site tRNAs. This is Large ribosomal subunit protein uL16 from Prochlorococcus marinus (strain MIT 9515).